The primary structure comprises 69 residues: Neuropeptide-like protein 30 (69 aa).

The first 22 residues, Met1–Ala22, serve as a signal peptide directing secretion. Tyr29, Tyr39, Tyr46, and Tyr53 each carry tyrosine amide. Trp58 and Trp67 each carry tryptophan amide.

The protein belongs to the YARP (YGGW-amide related peptide) family. As to expression, expressed in hypoderm.

It is found in the secreted. Functionally, may have antimicrobial activity. May play a role in response to fungal infection. The sequence is that of Neuropeptide-like protein 30 (nlp-30) from Caenorhabditis elegans.